Here is a 430-residue protein sequence, read N- to C-terminus: MTIRSSMKNNAELESKSVLANESNIISTFTRRIIKEKSGNYQVLKRSLDGKLIYPEATGISSNRGNKLLQRSEVVTRRDLNNSKPMIEQTVFYNGSEHRLLQTNIVTDSRRKRIKFTPDINVEPVLVGDENDIDGSEKEDENITDEYYGEEDDDDLSKLVNVKEILTPILSLGDIINHKTISRTFSSPILKNLALQIILMIEKEQMSVVRYSQFLEVFLGDHPEPIYESNLNLPSYNHNLTLPEDRGASDEDDINNKNNINEVNSNSLSTEAGHINNGMEEFGEEDPFFALPRLEQSNALLSLLPSSSGSASISTLTAAEQQQLNEEIESARQLSQIALQRNKEFIRNLQKIRKSVIKANRIRGRILNWSREYLGISDDDITIPVALRVVKRGLISATTNKTTNFEEEIENTMEDGVVDDNEPDEEANRA.

Residues 408-430 are disordered; that stretch reads EIENTMEDGVVDDNEPDEEANRA.

Belongs to the RXT2 family. Component of the RPD3C(L) complex composed of at least ASH1, CTI6, DEP1, PHO23, RPD3, RXT2, RXT3, SAP30, SDS3, SIN3, UME1 and UME6.

Its subcellular location is the nucleus. In terms of biological role, component of the RPD3C(L) histone deacetylase complex (HDAC) responsible for the deacetylation of lysine residues on the N-terminal part of the core histones (H2A, H2B, H3 and H4). Histone deacetylation gives a tag for epigenetic repression and plays an important role in transcriptional regulation, cell cycle progression and developmental events. The polypeptide is Transcriptional regulatory protein RXT2 (RXT2) (Saccharomyces cerevisiae (strain ATCC 204508 / S288c) (Baker's yeast)).